Reading from the N-terminus, the 328-residue chain is 4-hydroxythreonine-4-phosphate dehydrogenase (328 aa).

Substrate is bound by residues H130 and T131. H163, H208, and H263 together coordinate a divalent metal cation. K271, N280, and R289 together coordinate substrate.

Belongs to the PdxA family. Homodimer. Zn(2+) serves as cofactor. Mg(2+) is required as a cofactor. It depends on Co(2+) as a cofactor.

The protein resides in the cytoplasm. The enzyme catalyses 4-(phosphooxy)-L-threonine + NAD(+) = 3-amino-2-oxopropyl phosphate + CO2 + NADH. The protein operates within cofactor biosynthesis; pyridoxine 5'-phosphate biosynthesis; pyridoxine 5'-phosphate from D-erythrose 4-phosphate: step 4/5. In terms of biological role, catalyzes the NAD(P)-dependent oxidation of 4-(phosphooxy)-L-threonine (HTP) into 2-amino-3-oxo-4-(phosphooxy)butyric acid which spontaneously decarboxylates to form 3-amino-2-oxopropyl phosphate (AHAP). The protein is 4-hydroxythreonine-4-phosphate dehydrogenase of Burkholderia vietnamiensis (strain G4 / LMG 22486) (Burkholderia cepacia (strain R1808)).